The chain runs to 769 residues: 5-methyltetrahydropteroyltriglutamate--homocysteine methyltransferase (769 aa).

Residues 18-21 (RELK) and Lys127 contribute to the 5-methyltetrahydropteroyltri-L-glutamate site. Residues 447–449 (IGS) and Glu500 each bind L-homocysteine. L-methionine is bound by residues 447-449 (IGS) and Glu500. Residues 531-532 (RC) and Trp577 contribute to the 5-methyltetrahydropteroyltri-L-glutamate site. Residue Asp615 participates in L-homocysteine binding. An L-methionine-binding site is contributed by Asp615. Glu621 contacts 5-methyltetrahydropteroyltri-L-glutamate. Zn(2+)-binding residues include His657, Cys659, and Glu681. His710 serves as the catalytic Proton donor. Cys742 lines the Zn(2+) pocket.

Belongs to the vitamin-B12 independent methionine synthase family. The cofactor is Zn(2+).

The enzyme catalyses 5-methyltetrahydropteroyltri-L-glutamate + L-homocysteine = tetrahydropteroyltri-L-glutamate + L-methionine. Its pathway is amino-acid biosynthesis; L-methionine biosynthesis via de novo pathway; L-methionine from L-homocysteine (MetE route): step 1/1. Its function is as follows. Catalyzes the transfer of a methyl group from 5-methyltetrahydrofolate to homocysteine resulting in methionine formation. This chain is 5-methyltetrahydropteroyltriglutamate--homocysteine methyltransferase, found in Chelativorans sp. (strain BNC1).